The chain runs to 604 residues: Linalool synthase Tps-5042L13, chloroplastic (604 aa).

Residues 1–34 constitute a chloroplast transit peptide; the sequence is MSSMRIYVAIMKKPSVKHVDNVDKKASKPSWRVS. (2E)-geranyl diphosphate contacts are provided by R323, D360, D364, R501, and D504. Mg(2+) is bound by residues D360 and D364. The short motif at 360 to 364 is the DDXXD motif element; it reads DDVYD. 3 residues coordinate Mg(2+): D504, T508, and E512.

The protein belongs to the terpene synthase family. Tpsb subfamily. Monomer. Mg(2+) serves as cofactor. Mn(2+) is required as a cofactor.

It localises to the plastid. Its subcellular location is the chloroplast. It catalyses the reaction (2E)-geranyl diphosphate + H2O = linalool + diphosphate. The protein operates within secondary metabolite biosynthesis; terpenoid biosynthesis. Monoterpene synthase (mono-TPS) involved in the biosynthesis of monoterpenes natural products. Catalyzes the conversion of (2E)-geranyl diphosphate (GPP) into linalool. This chain is Linalool synthase Tps-5042L13, chloroplastic, found in Perilla frutescens (Beefsteak mint).